A 150-amino-acid polypeptide reads, in one-letter code: Meiotically up-regulated gene 108 protein (150 aa).

Residues 1–11 (MANRFTSSDQT) are compositionally biased toward polar residues. The tract at residues 1–150 (MANRFTSSDQ…RDISLLGSTI (150 aa)) is disordered. Basic and acidic residues predominate over residues 12-23 (QETHGHHVDKHS). Polar residues predominate over residues 83-93 (NRSSQHTGRVN).

The protein resides in the cytoplasm. Its subcellular location is the nucleus. Functionally, has a role in meiosis. This chain is Meiotically up-regulated gene 108 protein (mug108), found in Schizosaccharomyces pombe (strain 972 / ATCC 24843) (Fission yeast).